The sequence spans 108 residues: Phosphoribosyl-ATP pyrophosphatase (108 aa).

Belongs to the PRA-PH family.

It is found in the cytoplasm. It catalyses the reaction 1-(5-phospho-beta-D-ribosyl)-ATP + H2O = 1-(5-phospho-beta-D-ribosyl)-5'-AMP + diphosphate + H(+). It participates in amino-acid biosynthesis; L-histidine biosynthesis; L-histidine from 5-phospho-alpha-D-ribose 1-diphosphate: step 2/9. This Thiobacillus denitrificans (strain ATCC 25259 / T1) protein is Phosphoribosyl-ATP pyrophosphatase.